A 597-amino-acid chain; its full sequence is Sulfite reductase [NADPH] flavoprotein alpha-component (597 aa).

Residues valine 62 to valine 200 form the Flavodoxin-like domain. Residues serine 68–alanine 73, serine 115–glycine 118, and leucine 151–cysteine 160 contribute to the FMN site. The 215-residue stretch at glutamate 232–proline 446 folds into the FAD-binding FR-type domain. FAD is bound by residues threonine 320, asparagine 354, arginine 384 to serine 387, serine 402 to glycine 404, and glycine 417 to serine 420. NADP(+) contacts are provided by residues serine 517–arginine 518, lysine 523–glutamine 527, and aspartate 559. Tyrosine 597 contacts FAD.

It belongs to the NADPH-dependent sulphite reductase flavoprotein subunit CysJ family. In the N-terminal section; belongs to the flavodoxin family. The protein in the C-terminal section; belongs to the flavoprotein pyridine nucleotide cytochrome reductase family. Alpha(8)-beta(8). The alpha component is a flavoprotein, the beta component is a hemoprotein. Requires FAD as cofactor. It depends on FMN as a cofactor.

The catalysed reaction is hydrogen sulfide + 3 NADP(+) + 3 H2O = sulfite + 3 NADPH + 4 H(+). The protein operates within sulfur metabolism; hydrogen sulfide biosynthesis; hydrogen sulfide from sulfite (NADPH route): step 1/1. Functionally, component of the sulfite reductase complex that catalyzes the 6-electron reduction of sulfite to sulfide. This is one of several activities required for the biosynthesis of L-cysteine from sulfate. The flavoprotein component catalyzes the electron flow from NADPH -&gt; FAD -&gt; FMN to the hemoprotein component. The chain is Sulfite reductase [NADPH] flavoprotein alpha-component from Mannheimia succiniciproducens (strain KCTC 0769BP / MBEL55E).